The chain runs to 165 residues: Transcription antitermination protein NusB (165 aa).

The interval 139–165 (EAVRSHRRNKRPAADKPVATDKPAAAE) is disordered.

The protein belongs to the NusB family.

Involved in transcription antitermination. Required for transcription of ribosomal RNA (rRNA) genes. Binds specifically to the boxA antiterminator sequence of the ribosomal RNA (rrn) operons. This Laribacter hongkongensis (strain HLHK9) protein is Transcription antitermination protein NusB.